The following is a 393-amino-acid chain: Acetylornithine aminotransferase 1 (393 aa).

N(2)-acetyl-L-ornithine is bound at residue Arg131. A pyridoxal 5'-phosphate-binding site is contributed by 215-218 (DEVQ). At Lys244 the chain carries N6-(pyridoxal phosphate)lysine. A N(2)-acetyl-L-ornithine-binding site is contributed by Thr272. A pyridoxal 5'-phosphate-binding site is contributed by Thr273.

Belongs to the class-III pyridoxal-phosphate-dependent aminotransferase family. ArgD subfamily. Homodimer. Pyridoxal 5'-phosphate is required as a cofactor.

Its subcellular location is the cytoplasm. It catalyses the reaction N(2)-acetyl-L-ornithine + 2-oxoglutarate = N-acetyl-L-glutamate 5-semialdehyde + L-glutamate. It participates in amino-acid biosynthesis; L-arginine biosynthesis; N(2)-acetyl-L-ornithine from L-glutamate: step 4/4. The sequence is that of Acetylornithine aminotransferase 1 from Bordetella pertussis (strain Tohama I / ATCC BAA-589 / NCTC 13251).